Consider the following 842-residue polypeptide: uncharacterized protein (842 aa).

Disordered regions lie at residues 1-20 and 142-209; these read MLHF…SPKE and NSSS…TSSS. Residues 35-422 enclose the uDENN FNIP1/2-type domain; the sequence is TKDVTFRLVL…TAKSFHKCIL (388 aa). Over residues 183 to 209 the composition is skewed to polar residues; sequence ANLSSSSKNMKDSTLSSQKARSNTSSS. The region spanning 430-772 is the cDENN FNIP1/2-type domain; that stretch reads APLIKPSVFS…CYEIHEFPSE (343 aa). Ser-573 and Ser-590 each carry phosphoserine. Positions 777-842 constitute a dDENN FNIP1/2-type domain; the sequence is YAPFLLKEHH…KEVLRVCSHC (66 aa).

The protein localises to the cytoplasm. This is an uncharacterized protein from Schizosaccharomyces pombe (strain 972 / ATCC 24843) (Fission yeast).